The primary structure comprises 224 residues: Claudin-19 (224 aa).

Residues Met1–Gln7 are Cytoplasmic-facing. A helical transmembrane segment spans residues Leu8–Pro28. Topologically, residues Gln29–Arg81 are extracellular. An intrachain disulfide couples Cys54 to Cys64. A helical membrane pass occupies residues Ala82 to Met102. Over Lys103 to Arg117 the chain is Cytoplasmic. Residues Val118 to Ser138 traverse the membrane as a helical segment. Residues Trp139–Glu160 lie on the Extracellular side of the membrane. The helical transmembrane segment at Phe161–Phe181 threads the bilayer. Residues Leu182–Val224 lie on the Cytoplasmic side of the membrane.

It belongs to the claudin family. Can form homo- and heteropolymeric tight junction strands. Interacts with other claudins including CLDN3, CLDN10, CLDN16 and CLDN18 with highest affinity for CLDN16. Interacts (via PDZ-binding motif TRV) with TJP1 (via PDZ domain). As to quaternary structure, (Microbial infection) Interacts (via both extracellular domains) with Clostridium perfringens enterotoxin CPE; the interaction disrupts claudin assembly in tight junctions. As to expression, expressed in the corticomedullary axis of the TAL, specifically in the cortex and the outer stripe of outer medulla (OSOM) zone (at protein level). Expressed in peripheral nervous system, in Schwan cells (at protein level).

The protein resides in the cell junction. It localises to the tight junction. The protein localises to the cell membrane. It catalyses the reaction Mg(2+)(in) = Mg(2+)(out). The enzyme catalyses Ca(2+)(in) = Ca(2+)(out). It carries out the reaction Na(+)(in) = Na(+)(out). The catalysed reaction is K(+)(in) = K(+)(out). It catalyses the reaction Rb(+)(in) = Rb(+)(out). The enzyme catalyses Cs(+)(in) = Cs(+)(out). It carries out the reaction Li(+)(in) = Li(+)(out). Forms paracellular channels: coassembles with CLDN16 into tight junction strands with cation-selective channels through the strands, conveying epithelial permeability in a process known as paracellular tight junction permeability. Involved in the maintenance of ion gradients along the nephron. In the thick ascending limb (TAL) of Henle's loop, facilitates sodium paracellular permeability from the interstitial compartment to the lumen, contributing to the lumen-positive transepithelial potential that drives paracellular magnesium and calcium reabsorption. Forms paracellular barriers on its own. In the peripheral nervous system, represents a major constituent of the tight junctions in Schwann cells and contributes to electrical sealing. During retinal neurogenesis, may regulate the barrier properties of tight junctions in retinal pigment epithelium, required for proper retinal tissue differentiation and vision. The protein is Claudin-19 of Mus musculus (Mouse).